Here is a 433-residue protein sequence, read N- to C-terminus: Glycerol-3-phosphate dehydrogenase [NAD(+)] (433 aa).

NAD(+)-binding positions include 17 to 22 (GSGNWG), Phe49, and Phe117. Residue Lys140 coordinates substrate. NAD(+) is bound at residue Ala173. Residues 187 to 246 (IAYDPPPIDSSRAATPRDRSPNYDSTSANKLPDLTVTSADSNGKDDRGRRTKAKLTPVPE) form a disordered region. Positions 208–227 (NYDSTSANKLPDLTVTSADS) are enriched in polar residues. The Proton acceptor role is filled by Lys283. Arg349 and Gln378 together coordinate NAD(+). 349-350 (RN) is a substrate binding site.

It belongs to the NAD-dependent glycerol-3-phosphate dehydrogenase family.

It carries out the reaction sn-glycerol 3-phosphate + NAD(+) = dihydroxyacetone phosphate + NADH + H(+). The chain is Glycerol-3-phosphate dehydrogenase [NAD(+)] from Pyricularia oryzae (strain Y34) (Rice blast fungus).